The sequence spans 230 residues: Ribosome maturation factor RimM (230 aa).

Positions 149–230 (ADEFYWVDLI…RVVVDWEADY (82 aa)) constitute a PRC barrel domain.

It belongs to the RimM family. Binds ribosomal protein uS19.

The protein localises to the cytoplasm. Its function is as follows. An accessory protein needed during the final step in the assembly of 30S ribosomal subunit, possibly for assembly of the head region. Essential for efficient processing of 16S rRNA. May be needed both before and after RbfA during the maturation of 16S rRNA. It has affinity for free ribosomal 30S subunits but not for 70S ribosomes. This Burkholderia mallei (strain NCTC 10229) protein is Ribosome maturation factor RimM.